Reading from the N-terminus, the 229-residue chain is Adapter protein MecA (229 aa).

Belongs to the MecA family. As to quaternary structure, homodimer.

In terms of biological role, enables the recognition and targeting of unfolded and aggregated proteins to the ClpC protease or to other proteins involved in proteolysis. This is Adapter protein MecA from Latilactobacillus sakei subsp. sakei (strain 23K) (Lactobacillus sakei subsp. sakei).